The following is a 140-amino-acid chain: Nucleoside diphosphate kinase (140 aa).

Residues Lys-11, Phe-59, Arg-87, Thr-93, Arg-104, and Asn-114 each contribute to the ATP site. The active-site Pros-phosphohistidine intermediate is the His-117.

Belongs to the NDK family. In terms of assembly, homotetramer. Requires Mg(2+) as cofactor.

It is found in the cytoplasm. The catalysed reaction is a 2'-deoxyribonucleoside 5'-diphosphate + ATP = a 2'-deoxyribonucleoside 5'-triphosphate + ADP. The enzyme catalyses a ribonucleoside 5'-diphosphate + ATP = a ribonucleoside 5'-triphosphate + ADP. Functionally, major role in the synthesis of nucleoside triphosphates other than ATP. The ATP gamma phosphate is transferred to the NDP beta phosphate via a ping-pong mechanism, using a phosphorylated active-site intermediate. The protein is Nucleoside diphosphate kinase of Chelativorans sp. (strain BNC1).